We begin with the raw amino-acid sequence, 243 residues long: Uridylate kinase (243 aa).

15 to 18 (KISG) contacts ATP. Glycine 57 contributes to the UMP binding site. Positions 58 and 62 each coordinate ATP. UMP-binding positions include aspartate 77 and 138 to 145 (TGNPFFTT). ATP contacts are provided by threonine 165, phenylalanine 171, and aspartate 174.

This sequence belongs to the UMP kinase family. Homohexamer.

It is found in the cytoplasm. It carries out the reaction UMP + ATP = UDP + ADP. It functions in the pathway pyrimidine metabolism; CTP biosynthesis via de novo pathway; UDP from UMP (UMPK route): step 1/1. Inhibited by UTP. Functionally, catalyzes the reversible phosphorylation of UMP to UDP. The sequence is that of Uridylate kinase from Blochmanniella floridana.